The primary structure comprises 99 residues: Large ribosomal subunit protein uL23 (99 aa).

It belongs to the universal ribosomal protein uL23 family. As to quaternary structure, part of the 50S ribosomal subunit. Contacts protein L29, and trigger factor when it is bound to the ribosome.

Functionally, one of the early assembly proteins it binds 23S rRNA. One of the proteins that surrounds the polypeptide exit tunnel on the outside of the ribosome. Forms the main docking site for trigger factor binding to the ribosome. The sequence is that of Large ribosomal subunit protein uL23 from Oenococcus oeni (strain ATCC BAA-331 / PSU-1).